Consider the following 468-residue polypeptide: 55 kDa erythrocyte membrane protein (468 aa).

The region spanning 73 to 154 is the PDZ domain; sequence LVQFEKVTEE…MVSIKVIPNQ (82 aa). The SH3 domain maps to 160–230; it reads ALQMFMRAQF…PSPELQEWRV (71 aa). The Guanylate kinase-like domain maps to 284–453; the sequence is RKTLVLIGAS…SLKLLEEAFE (170 aa).

This sequence belongs to the MAGUK family.

It is found in the membrane. Its subcellular location is the cell projection. The protein localises to the stereocilium. May play a role in the regulation of neutrophil polarization. The chain is 55 kDa erythrocyte membrane protein (MPP1) from Gallus gallus (Chicken).